The chain runs to 229 residues: Small ribosomal subunit protein uS2c (229 aa).

It belongs to the universal ribosomal protein uS2 family.

The protein localises to the plastid. It localises to the chloroplast. The polypeptide is Small ribosomal subunit protein uS2c (rps2) (Emiliania huxleyi (Coccolithophore)).